The primary structure comprises 337 residues: Terpene synthase 4 (337 aa).

Residues D94 and D98 each contribute to the Mg(2+) site. The D(D/E)XX(D/E) motif signature appears at 94–98 (DDIFD). R195 serves as a coordination point for substrate. 3 residues coordinate Mg(2+): N241, S245, and E249. An NSE motif motif is present at residues 241-249 (NDIYSYHRE). The short motif at 320-327 (WSESCTRY) is the WxxxxxRY motif element.

Belongs to the terpene synthase family. Mg(2+) serves as cofactor.

It carries out the reaction (2E,6E)-farnesyl diphosphate = alpha-muurolene + diphosphate. The enzyme catalyses (2E,6E)-farnesyl diphosphate = (-)-(E)-beta-caryophyllene + diphosphate. Terpene synthase that catalyzes the cyclization of farnesyl diphosphate (FPP) into alpha-muurolene, (-)-beta-caryophyllene, and one unidentified sesquiterpene. TPS4 shows only trace monoterpene synthase activity with geranyl diphosphate (GPP) as substrate and produces very small amounts of myrcene. P.polycephalum has a unique biology and these volatile terpenoids could function in internal communication of P.polycephalum, to mark the territory that have been explored, or they may be involved in chemotaxis. In Physarum polycephalum (Slime mold), this protein is Terpene synthase 4.